The following is a 323-amino-acid chain: Lipoyl synthase (323 aa).

[4Fe-4S] cluster contacts are provided by C61, C66, C72, C87, C91, C94, and S303. The region spanning 73–292 (WTKKTATFLV…EQYGLSIGIP (220 aa)) is the Radical SAM core domain.

Belongs to the radical SAM superfamily. Lipoyl synthase family. Requires [4Fe-4S] cluster as cofactor.

It is found in the cytoplasm. It carries out the reaction [[Fe-S] cluster scaffold protein carrying a second [4Fe-4S](2+) cluster] + N(6)-octanoyl-L-lysyl-[protein] + 2 oxidized [2Fe-2S]-[ferredoxin] + 2 S-adenosyl-L-methionine + 4 H(+) = [[Fe-S] cluster scaffold protein] + N(6)-[(R)-dihydrolipoyl]-L-lysyl-[protein] + 4 Fe(3+) + 2 hydrogen sulfide + 2 5'-deoxyadenosine + 2 L-methionine + 2 reduced [2Fe-2S]-[ferredoxin]. It functions in the pathway protein modification; protein lipoylation via endogenous pathway; protein N(6)-(lipoyl)lysine from octanoyl-[acyl-carrier-protein]: step 2/2. Functionally, catalyzes the radical-mediated insertion of two sulfur atoms into the C-6 and C-8 positions of the octanoyl moiety bound to the lipoyl domains of lipoate-dependent enzymes, thereby converting the octanoylated domains into lipoylated derivatives. The chain is Lipoyl synthase from Protochlamydia amoebophila (strain UWE25).